The sequence spans 252 residues: Imidazole glycerol phosphate synthase subunit HisF (252 aa).

Catalysis depends on residues Asp-12 and Asp-131.

The protein belongs to the HisA/HisF family. As to quaternary structure, heterodimer of HisH and HisF.

It localises to the cytoplasm. The catalysed reaction is 5-[(5-phospho-1-deoxy-D-ribulos-1-ylimino)methylamino]-1-(5-phospho-beta-D-ribosyl)imidazole-4-carboxamide + L-glutamine = D-erythro-1-(imidazol-4-yl)glycerol 3-phosphate + 5-amino-1-(5-phospho-beta-D-ribosyl)imidazole-4-carboxamide + L-glutamate + H(+). The protein operates within amino-acid biosynthesis; L-histidine biosynthesis; L-histidine from 5-phospho-alpha-D-ribose 1-diphosphate: step 5/9. In terms of biological role, IGPS catalyzes the conversion of PRFAR and glutamine to IGP, AICAR and glutamate. The HisF subunit catalyzes the cyclization activity that produces IGP and AICAR from PRFAR using the ammonia provided by the HisH subunit. The sequence is that of Imidazole glycerol phosphate synthase subunit HisF from Thermus thermophilus (strain ATCC BAA-163 / DSM 7039 / HB27).